The sequence spans 95 residues: Integration host factor subunit beta (95 aa).

The protein belongs to the bacterial histone-like protein family. As to quaternary structure, heterodimer of an alpha and a beta chain.

This protein is one of the two subunits of integration host factor, a specific DNA-binding protein that functions in genetic recombination as well as in transcriptional and translational control. In Jannaschia sp. (strain CCS1), this protein is Integration host factor subunit beta.